The primary structure comprises 695 residues: MNIKTKSFTMGKHIVTLETGRIARQAHGAVLASMDDTQVLVTVVSSKETRPGQDFFPLSVDYIEKTYSTGKIPGSFLKREARPSEKETLTSRLIDRTIRPLFPNGFMNEIQVLITVVSANSEVNPDIISMLGVSAALSISGVPFSRPIGGSRVGYSNGEYILNPTYIELTNSDLDMVVAGTDEAVLMVESEANELSEEIMLGAVVYAHEQYQVAITNIAEFTTEVGMQKWDWIAPITNEVLLSDIKSKFGKEINKAYQIKEKLDRHAKIDNIRMAAIEALENENENGNSAEEVSKYFKEVEKSTVRERILNNDSRIDGRNNETVRELKIETGILKNTHGSALFTRGETQALVVTTLGPKSDAQLIEKLESPERQNNYFLLHYNFPPYCVGETGRLATIKRREIGHGHLARRGITACLPSIEEFPYTVRVVSEITESNGSSSMASVCGSSLSLMDAGVPIKAPIAGIAMGLVKENDRFTVLTDILGDEDHLGDMDFKVAGTSRGVNALQMDIKIQSITHEIMEIALKQAKEARLNILGQMNQVICEPNTSNKNTPKTTIIKIKTDKIRDLIGRGGETIKGIISTSCASIDVDDSGNVNIFSNNQKSFDTAVQMVKDVTAIPEVNKVYTGKVVKIVEFGAFINIMPNQDGLLHISEISHERVEKVKDHIREGDKIDVKVIGLDRGRIKLSRKVLLEK.

Positions 488 and 494 each coordinate Mg(2+). In terms of domain architecture, KH spans 554-613 (PKTTIIKIKTDKIRDLIGRGGETIKGIISTSCASIDVDDSGNVNIFSNNQKSFDTAVQMV). Positions 623-690 (NKVYTGKVVK…DRGRIKLSRK (68 aa)) constitute an S1 motif domain.

It belongs to the polyribonucleotide nucleotidyltransferase family. In terms of assembly, component of the RNA degradosome, which is a multiprotein complex involved in RNA processing and mRNA degradation. The cofactor is Mg(2+).

It is found in the cytoplasm. The catalysed reaction is RNA(n+1) + phosphate = RNA(n) + a ribonucleoside 5'-diphosphate. Involved in mRNA degradation. Catalyzes the phosphorolysis of single-stranded polyribonucleotides processively in the 3'- to 5'-direction. The sequence is that of Polyribonucleotide nucleotidyltransferase from Vesicomyosocius okutanii subsp. Calyptogena okutanii (strain HA).